The primary structure comprises 426 residues: Serine hydroxymethyltransferase (426 aa).

(6S)-5,6,7,8-tetrahydrofolate-binding positions include leucine 118 and 122 to 124 (GHL). Lysine 227 bears the N6-(pyridoxal phosphate)lysine mark.

This sequence belongs to the SHMT family. In terms of assembly, homodimer. The cofactor is pyridoxal 5'-phosphate.

It localises to the cytoplasm. It catalyses the reaction (6R)-5,10-methylene-5,6,7,8-tetrahydrofolate + glycine + H2O = (6S)-5,6,7,8-tetrahydrofolate + L-serine. It participates in one-carbon metabolism; tetrahydrofolate interconversion. Its pathway is amino-acid biosynthesis; glycine biosynthesis; glycine from L-serine: step 1/1. In terms of biological role, catalyzes the reversible interconversion of serine and glycine with tetrahydrofolate (THF) serving as the one-carbon carrier. This reaction serves as the major source of one-carbon groups required for the biosynthesis of purines, thymidylate, methionine, and other important biomolecules. Also exhibits THF-independent aldolase activity toward beta-hydroxyamino acids, producing glycine and aldehydes, via a retro-aldol mechanism. This is Serine hydroxymethyltransferase from Mycobacterium leprae (strain Br4923).